Reading from the N-terminus, the 355-residue chain is Serum paraoxonase/arylesterase 1 (355 aa).

Residues cysteine 42 and cysteine 353 are joined by a disulfide bond. Residues glutamate 53 and aspartate 54 each coordinate Ca(2+). The active-site Proton acceptor is histidine 115. Ca(2+) is bound by residues isoleucine 117, asparagine 168, aspartate 169, and asparagine 224. Asparagine 253 carries N-linked (GlcNAc...) asparagine glycosylation. Ca(2+) is bound by residues aspartate 269 and asparagine 270. Residues asparagine 270 and asparagine 324 are each glycosylated (N-linked (GlcNAc...) asparagine).

Belongs to the paraoxonase family. Homodimer. Interacts with CLU. Requires Ca(2+) as cofactor. Glycosylated. Post-translationally, the signal sequence is not cleaved. As to expression, plasma. Associated with HDL.

It localises to the secreted. The protein localises to the extracellular space. The catalysed reaction is a phenyl acetate + H2O = a phenol + acetate + H(+). The enzyme catalyses An aryl dialkyl phosphate + H2O = dialkyl phosphate + an aryl alcohol.. It catalyses the reaction an N-acyl-L-homoserine lactone + H2O = an N-acyl-L-homoserine + H(+). Hydrolyzes the toxic metabolites of a variety of organophosphorus insecticides. Capable of hydrolyzing a broad spectrum of organophosphate substrates and lactones, and a number of aromatic carboxylic acid esters. Mediates an enzymatic protection of low density lipoproteins against oxidative modification. This Rattus norvegicus (Rat) protein is Serum paraoxonase/arylesterase 1 (Pon1).